A 193-amino-acid polypeptide reads, in one-letter code: Non-canonical purine NTP pyrophosphatase homolog (193 aa).

The protein belongs to the HAM1 NTPase family.

This chain is Non-canonical purine NTP pyrophosphatase homolog, found in Halalkalibacterium halodurans (strain ATCC BAA-125 / DSM 18197 / FERM 7344 / JCM 9153 / C-125) (Bacillus halodurans).